Here is a 378-residue protein sequence, read N- to C-terminus: Mannitol-1-phosphate 5-dehydrogenase (378 aa).

NAD(+) is bound at residue 4-15 (SVHFGAGNIGRG).

Belongs to the mannitol dehydrogenase family.

The enzyme catalyses D-mannitol 1-phosphate + NAD(+) = beta-D-fructose 6-phosphate + NADH + H(+). This chain is Mannitol-1-phosphate 5-dehydrogenase, found in Streptococcus pneumoniae (strain ATCC 700669 / Spain 23F-1).